The primary structure comprises 285 residues: Nucleotide-binding protein Avin_12760 (285 aa).

8-15 (GRSGSGKS) is a binding site for ATP. 60-63 (DARN) lines the GTP pocket.

Belongs to the RapZ-like family.

Its function is as follows. Displays ATPase and GTPase activities. In Azotobacter vinelandii (strain DJ / ATCC BAA-1303), this protein is Nucleotide-binding protein Avin_12760.